Here is a 288-residue protein sequence, read N- to C-terminus: Carbon monoxide dehydrogenase medium chain (288 aa).

The region spanning 1-177 is the FAD-binding PCMH-type domain; the sequence is MIPGSFDYHR…TAIRIPVPPT (177 aa). FAD-binding positions include 32–36 and 111–115; these read AGGHS and TIGGN.

As to quaternary structure, dimer of heterotrimers. Each heterotrimer consists of a large, a medium and a small subunit. The cofactor is FAD.

It carries out the reaction CO + a quinone + H2O = a quinol + CO2. Functionally, catalyzes the oxidation of carbon monoxide to carbon dioxide. The protein is Carbon monoxide dehydrogenase medium chain (coxM) of Afipia carboxidovorans (strain ATCC 49405 / DSM 1227 / KCTC 32145 / OM5) (Oligotropha carboxidovorans).